A 550-amino-acid polypeptide reads, in one-letter code: Hydroxylamine reductase (550 aa).

[2Fe-2S] cluster-binding residues include Cys-3, Cys-6, Cys-18, and Cys-25. Hybrid [4Fe-2O-2S] cluster is bound by residues His-249, Glu-273, Cys-317, Cys-405, Cys-433, Cys-458, Glu-492, and Lys-494. The residue at position 405 (Cys-405) is a Cysteine persulfide.

It belongs to the HCP family. It depends on [2Fe-2S] cluster as a cofactor. Hybrid [4Fe-2O-2S] cluster serves as cofactor.

It localises to the cytoplasm. It carries out the reaction A + NH4(+) + H2O = hydroxylamine + AH2 + H(+). Catalyzes the reduction of hydroxylamine to form NH(3) and H(2)O. This is Hydroxylamine reductase from Escherichia coli O139:H28 (strain E24377A / ETEC).